The primary structure comprises 474 residues: Shugoshin-1 (474 aa).

Disordered stretches follow at residues 1-53 (MTST…KPNA), 189-226 (VESQ…NQGS), 322-356 (NSKQ…RCSK), and 422-442 (VSME…RKSN). 2 stretches are compositionally biased toward polar residues: residues 12-22 (GSLNPPHSNPS) and 190-201 (ESQSAVSSNTVC). The segment covering 211-220 (KRMPQRRRSS) has biased composition (basic residues). Polar residues-rich tracts occupy residues 322–341 (NSKQ…NTVD) and 422–431 (VSMEQRTNQE).

It belongs to the shugoshin family. Highly expressed in tissues containing meiocytes. Expressed at much lower level in leaves and pollen-containing flowers.

The protein resides in the nucleus. Its subcellular location is the chromosome. It is found in the centromere. Plays a central role in chromosome cohesion during meiosis I by preventing premature dissociation of cohesin complex from centromeres after prophase, when most of cohesin complex dissociates from chromosomes arms. Required for maintenance of centromeric cohesion before prophase II and correct segregation of chromatids during meiosis II. Has apparently no function in mitosis. This Zea mays (Maize) protein is Shugoshin-1.